Here is a 153-residue protein sequence, read N- to C-terminus: Nascent polypeptide-associated complex subunit beta (153 aa).

Disordered regions lie at residues M1–K40 and L126–E153. Basic residues predominate over residues T23–P32. The region spanning G36–V101 is the NAC-A/B domain. The span at E132–E147 shows a compositional bias: acidic residues.

It belongs to the NAC-beta family. Part of the nascent polypeptide-associated complex (NAC), consisting of EGD2 and EGD1. NAC associates with ribosomes via EGD1.

The protein resides in the cytoplasm. It is found in the nucleus. Functionally, component of the nascent polypeptide-associated complex (NAC), a dynamic component of the ribosomal exit tunnel, protecting the emerging polypeptides from interaction with other cytoplasmic proteins to ensure appropriate nascent protein targeting. The NAC complex also promotes mitochondrial protein import by enhancing productive ribosome interactions with the outer mitochondrial membrane and blocks the inappropriate interaction of ribosomes translating non-secretory nascent polypeptides with translocation sites in the membrane of the endoplasmic reticulum. EGD1 may act as a transcription factor that exert a negative effect on the expression of several genes that are transcribed by RNA polymerase II. The protein is Nascent polypeptide-associated complex subunit beta (EGD1) of Gibberella zeae (strain ATCC MYA-4620 / CBS 123657 / FGSC 9075 / NRRL 31084 / PH-1) (Wheat head blight fungus).